A 307-amino-acid chain; its full sequence is 1-aminocyclopropane-1-carboxylate oxidase 5 (307 aa).

Residues 106-134 (SNIKETMGEYREEVRKLASKMMEVMDENL) adopt a coiled-coil conformation. The region spanning 152 to 256 (GEETAFFGTK…RRSIASFYNP (105 aa)) is the Fe2OG dioxygenase domain. Residues His180, Asp182, and His237 each contribute to the Fe cation site. Arg247 is a binding site for 2-oxoglutarate.

Belongs to the iron/ascorbate-dependent oxidoreductase family. Fe(2+) serves as cofactor.

The catalysed reaction is 1-aminocyclopropane-1-carboxylate + L-ascorbate + O2 = ethene + L-dehydroascorbate + hydrogen cyanide + CO2 + 2 H2O. It functions in the pathway alkene biosynthesis; ethylene biosynthesis via S-adenosyl-L-methionine; ethylene from S-adenosyl-L-methionine: step 2/2. Functionally, enzyme involved in the ethylene biosynthesis. In Arabidopsis thaliana (Mouse-ear cress), this protein is 1-aminocyclopropane-1-carboxylate oxidase 5.